Here is a 152-residue protein sequence, read N- to C-terminus: ARL14 effector protein-like (152 aa).

A disordered region spans residues 1-21; the sequence is MNEQSEKNNSIQERHTDHSFP.

The sequence is that of ARL14 effector protein-like (ARL14EPL) from Homo sapiens (Human).